The chain runs to 177 residues: ATP synthase subunit delta (177 aa).

Belongs to the ATPase delta chain family. As to quaternary structure, F-type ATPases have 2 components, F(1) - the catalytic core - and F(0) - the membrane proton channel. F(1) has five subunits: alpha(3), beta(3), gamma(1), delta(1), epsilon(1). F(0) has three main subunits: a(1), b(2) and c(10-14). The alpha and beta chains form an alternating ring which encloses part of the gamma chain. F(1) is attached to F(0) by a central stalk formed by the gamma and epsilon chains, while a peripheral stalk is formed by the delta and b chains.

The protein localises to the cell inner membrane. F(1)F(0) ATP synthase produces ATP from ADP in the presence of a proton or sodium gradient. F-type ATPases consist of two structural domains, F(1) containing the extramembraneous catalytic core and F(0) containing the membrane proton channel, linked together by a central stalk and a peripheral stalk. During catalysis, ATP synthesis in the catalytic domain of F(1) is coupled via a rotary mechanism of the central stalk subunits to proton translocation. In terms of biological role, this protein is part of the stalk that links CF(0) to CF(1). It either transmits conformational changes from CF(0) to CF(1) or is implicated in proton conduction. The chain is ATP synthase subunit delta from Yersinia pseudotuberculosis serotype O:1b (strain IP 31758).